Here is a 321-residue protein sequence, read N- to C-terminus: Lipoyl synthase (321 aa).

Positions 68, 73, 79, 94, 98, 101, and 308 each coordinate [4Fe-4S] cluster. Residues 80-297 (FNHGTATFMI…KELAESIGFT (218 aa)) enclose the Radical SAM core domain.

The protein belongs to the radical SAM superfamily. Lipoyl synthase family. [4Fe-4S] cluster is required as a cofactor.

It localises to the cytoplasm. It carries out the reaction [[Fe-S] cluster scaffold protein carrying a second [4Fe-4S](2+) cluster] + N(6)-octanoyl-L-lysyl-[protein] + 2 oxidized [2Fe-2S]-[ferredoxin] + 2 S-adenosyl-L-methionine + 4 H(+) = [[Fe-S] cluster scaffold protein] + N(6)-[(R)-dihydrolipoyl]-L-lysyl-[protein] + 4 Fe(3+) + 2 hydrogen sulfide + 2 5'-deoxyadenosine + 2 L-methionine + 2 reduced [2Fe-2S]-[ferredoxin]. Its pathway is protein modification; protein lipoylation via endogenous pathway; protein N(6)-(lipoyl)lysine from octanoyl-[acyl-carrier-protein]: step 2/2. Functionally, catalyzes the radical-mediated insertion of two sulfur atoms into the C-6 and C-8 positions of the octanoyl moiety bound to the lipoyl domains of lipoate-dependent enzymes, thereby converting the octanoylated domains into lipoylated derivatives. This is Lipoyl synthase from Shewanella halifaxensis (strain HAW-EB4).